The following is a 244-amino-acid chain: DNA repair protein RecO (244 aa).

It belongs to the RecO family.

Its function is as follows. Involved in DNA repair and RecF pathway recombination. This Polynucleobacter necessarius subsp. necessarius (strain STIR1) protein is DNA repair protein RecO.